A 189-amino-acid polypeptide reads, in one-letter code: GMP synthase [glutamine-hydrolyzing] subunit A (189 aa).

In terms of domain architecture, Glutamine amidotransferase type-1 spans 1-189 (MIVILNNGGQ…CKKCGFEFEE (189 aa)). The active-site Nucleophile is the cysteine 76. Catalysis depends on residues histidine 163 and glutamate 165.

In terms of assembly, heterodimer composed of a glutamine amidotransferase subunit (A) and a GMP-binding subunit (B).

The enzyme catalyses XMP + L-glutamine + ATP + H2O = GMP + L-glutamate + AMP + diphosphate + 2 H(+). It functions in the pathway purine metabolism; GMP biosynthesis; GMP from XMP (L-Gln route): step 1/1. Functionally, catalyzes the synthesis of GMP from XMP. This chain is GMP synthase [glutamine-hydrolyzing] subunit A, found in Methanococcus maripaludis (strain C5 / ATCC BAA-1333).